An 854-amino-acid polypeptide reads, in one-letter code: Aryl hydrocarbon receptor (854 aa).

Positions 1–9 are excised as a propeptide; sequence MSSGANITY. Residues 1–38 are disordered; the sequence is MSSGANITYASRKRRKPVQKTVKPIPAEGIKSNPSKRH. 2 consecutive short sequence motifs (nuclear localization signal) follow at residues 12-15 and 36-41; these read RKRR and KRHRDR. Residues 26–79 enclose the bHLH domain; that stretch reads PAEGIKSNPSKRHRDRLNTELDRLASLLPFPQDVINKLDKLSVLRLSVSYLRAK. Positions 37-65 are DNA-binding; sequence RHRDRLNTELDRLASLLPFPQDVINKLDK. Required for maintaining the overall integrity of the AHR:ARNT heterodimer and its transcriptional activity stretches follow at residues 49 to 81, 116 to 124, and 264 to 266; these read LASL…AKSF, LLQALNGFV, and FAI. The short motif at 63–71 is the Nuclear export signal element; it reads LDKLSVLRL. The PAS 1 domain maps to 111–175; it reads QEGEFLLQAL…AEFQRQLHWA (65 aa). The region spanning 270 to 340 is the PAS 2 domain; sequence LQPPSILEIR…CAESHIRMIK (71 aa). The PAC domain occupies 346–387; it reads MTVFRLLAKHSRWRWVQSNARLIYRNGRPDYIIATQRPLTDE. Residues 425–451 form a disordered region; the sequence is LPIRTKSNTSRKDWAPQSTPSKDSFHP. Polar residues predominate over residues 440 to 451; sequence PQSTPSKDSFHP.

As to quaternary structure, homodimer. Heterodimer; efficient DNA binding requires dimerization with another bHLH protein. Interacts with ARNT; the heterodimer ARNT:AHR binds to core DNA sequence 5'-TGCGTG-3' within the dioxin response element (DRE) of target gene promoters and activates their transcription. Binds MYBBP1A. Interacts with coactivators including SRC-1, RIP140 and NOCA7, and with the corepressor SMRT. Interacts with NEDD8 and IVNS1ABP. Interacts with BMAL1. Interacts with HSP90AB1. Interacts with TIPARP; leading to mono-ADP-ribosylation of AHR and subsequent inhibition of AHR. In terms of processing, mono-ADP-ribosylated, leading to inhibit transcription activator activity of AHR.

The protein localises to the cytoplasm. The protein resides in the nucleus. Its function is as follows. Ligand-activated transcription factor that enables cells to adapt to changing conditions by sensing compounds from the environment, diet, microbiome and cellular metabolism, and which plays important roles in development, immunity and cancer. Upon ligand binding, translocates into the nucleus, where it heterodimerizes with ARNT and induces transcription by binding to xenobiotic response elements (XRE). Regulates a variety of biological processes, including angiogenesis, hematopoiesis, drug and lipid metabolism, cell motility and immune modulation. Xenobiotics can act as ligands: upon xenobiotic-binding, activates the expression of multiple phase I and II xenobiotic chemical metabolizing enzyme genes (such as the CYP1A1 gene). Mediates biochemical and toxic effects of halogenated aromatic hydrocarbons. Next to xenobiotics, natural ligands derived from plants, microbiota, and endogenous metabolism are potent AHR agonists. Tryptophan (Trp) derivatives constitute an important class of endogenous AHR ligands. Acts as a negative regulator of anti-tumor immunity: indoles and kynurenic acid generated by Trp catabolism act as ligand and activate AHR, thereby promoting AHR-driven cancer cell motility and suppressing adaptive immunity. Regulates the circadian clock by inhibiting the basal and circadian expression of the core circadian component PER1. Inhibits PER1 by repressing the CLOCK-BMAL1 heterodimer mediated transcriptional activation of PER1. The heterodimer ARNT:AHR binds to core DNA sequence 5'-TGCGTG-3' within the dioxin response element (DRE) of target gene promoters and activates their transcription. The sequence is that of Aryl hydrocarbon receptor (Ahr) from Mus spicilegus (Steppe mouse).